We begin with the raw amino-acid sequence, 70 residues long: DNA-directed RNA polymerase subunit omega (70 aa).

It belongs to the RNA polymerase subunit omega family. The RNAP catalytic core consists of 2 alpha, 1 beta, 1 beta' and 1 omega subunit. When a sigma factor is associated with the core the holoenzyme is formed, which can initiate transcription.

It catalyses the reaction RNA(n) + a ribonucleoside 5'-triphosphate = RNA(n+1) + diphosphate. Its function is as follows. Promotes RNA polymerase assembly. Latches the N- and C-terminal regions of the beta' subunit thereby facilitating its interaction with the beta and alpha subunits. The chain is DNA-directed RNA polymerase subunit omega from Caldanaerobacter subterraneus subsp. tengcongensis (strain DSM 15242 / JCM 11007 / NBRC 100824 / MB4) (Thermoanaerobacter tengcongensis).